We begin with the raw amino-acid sequence, 276 residues long: Large ribosomal subunit protein uL2 (276 aa).

The segment at 213-264 is disordered; that stretch reads WLGRRPHNRGVVMNPVDHPHGGGEGRTSGGRHPVTPWGKPTKGYKTRTNKRT.

The protein belongs to the universal ribosomal protein uL2 family. As to quaternary structure, part of the 50S ribosomal subunit. Forms a bridge to the 30S subunit in the 70S ribosome.

Its function is as follows. One of the primary rRNA binding proteins. Required for association of the 30S and 50S subunits to form the 70S ribosome, for tRNA binding and peptide bond formation. It has been suggested to have peptidyltransferase activity; this is somewhat controversial. Makes several contacts with the 16S rRNA in the 70S ribosome. The polypeptide is Large ribosomal subunit protein uL2 (Granulibacter bethesdensis (strain ATCC BAA-1260 / CGDNIH1)).